A 168-amino-acid chain; its full sequence is Peptide deformylase 1 (168 aa).

Fe cation contacts are provided by cysteine 92 and histidine 134. Glutamate 135 is a catalytic residue. Histidine 138 is a Fe cation binding site.

It belongs to the polypeptide deformylase family. It depends on Fe(2+) as a cofactor.

The enzyme catalyses N-terminal N-formyl-L-methionyl-[peptide] + H2O = N-terminal L-methionyl-[peptide] + formate. Removes the formyl group from the N-terminal Met of newly synthesized proteins. Requires at least a dipeptide for an efficient rate of reaction. N-terminal L-methionine is a prerequisite for activity but the enzyme has broad specificity at other positions. The chain is Peptide deformylase 1 from Pseudomonas syringae pv. tomato (strain ATCC BAA-871 / DC3000).